Consider the following 622-residue polypeptide: Threonine--tRNA ligase (622 aa).

The segment at 1–141 (MKTLLIHSDY…SRKITTERKE (141 aa)) is editing domain. The segment at 199 to 498 (PHVKYIKEKE…TLENKPPALP (300 aa)) is catalytic. Zn(2+)-binding residues include cysteine 291, histidine 343, and histidine 467.

Belongs to the class-II aminoacyl-tRNA synthetase family. Homodimer. It depends on Zn(2+) as a cofactor.

Its subcellular location is the cytoplasm. The catalysed reaction is tRNA(Thr) + L-threonine + ATP = L-threonyl-tRNA(Thr) + AMP + diphosphate + H(+). Functionally, catalyzes the attachment of threonine to tRNA(Thr) in a two-step reaction: L-threonine is first activated by ATP to form Thr-AMP and then transferred to the acceptor end of tRNA(Thr). Also edits incorrectly charged L-seryl-tRNA(Thr). In Methanococcus maripaludis (strain C5 / ATCC BAA-1333), this protein is Threonine--tRNA ligase.